Consider the following 191-residue polypeptide: UPF0312 protein Sbal_3041 (191 aa).

The N-terminal stretch at 1–22 is a signal peptide; sequence MKKQLLSALIGASLLAPMAASA.

Belongs to the UPF0312 family. Type 1 subfamily.

The protein resides in the periplasm. This chain is UPF0312 protein Sbal_3041, found in Shewanella baltica (strain OS155 / ATCC BAA-1091).